A 373-amino-acid polypeptide reads, in one-letter code: Ferroptosis suppressor protein 1 (373 aa).

Residue G2 is the site of N-myristoyl glycine attachment. A helical transmembrane segment spans residues 7–27 (VDTGAVHVVIVGGGFGGIAAA). 6-hydroxy-FAD is bound by residues 18-22 (GGGFG), R54, and V82. K168 carries the post-translational modification N6-acetyllysine. D285 contributes to the 6-hydroxy-FAD binding site.

This sequence belongs to the FAD-dependent oxidoreductase family. As to quaternary structure, interacts with importin subunits KPNA2 and IPO5; this interaction likely mediates the translocation into the nucleus upon oxidative stress. It depends on 6-hydroxy-FAD as a cofactor. In terms of processing, N-myristoylation at Gly-2 mediates the recruitment to lipid droplets and plasma membrane. Post-translationally, acetylation at Lys-168 prevents AIFM2 ubiquitination and degradation, thereby inhibiting ferroptosis. KAT2B mediates acetylation at Lys-168, while HDAC3 removes it. Ubiquitinated. AIFM2 undergoes 'Lys-29'-ubiquitination and proteasomal degradation, which is inhibited by acetylation at Lys-168. In terms of tissue distribution, detected in most normal tissues as two transcripts of 1.8 and 4.0 kb in length, respectively. Highly expressed in liver, testis, and kidney, and expressed at lower levels in pancreas, spleen, brain and lung. Expressed in heart (at protein level).

The protein resides in the lipid droplet. Its subcellular location is the cell membrane. It localises to the cytoplasm. The protein localises to the mitochondrion membrane. It is found in the nucleus. The enzyme catalyses ubiquinone-10 + NADH + H(+) = ubiquinol-10 + NAD(+). It catalyses the reaction phylloquinone + NADH + H(+) = phylloquinol + NAD(+). It carries out the reaction menaquinone-4 + NADH + H(+) = menaquinol-4 + NAD(+). The catalysed reaction is menadione + NADH + H(+) = menadiol + NAD(+). With respect to regulation, the modification by 4-hydroxy-2-nonenal (HNE) adduction in mitochondria results in loss of the oxidoreductase activity and activation of a novel function in mitochondrial oxidative stress signaling. Functionally, a NAD(P)H-dependent oxidoreductase that acts as a key inhibitor of ferroptosis. At the plasma membrane, catalyzes reduction of coenzyme Q/ubiquinone-10 to ubiquinol-10, a lipophilic radical-trapping antioxidant that prevents lipid oxidative damage and consequently ferroptosis. Acts in parallel to GPX4 to suppress phospholipid peroxidation and ferroptosis. This anti-ferroptotic function is independent of cellular glutathione levels. Also acts as a potent radical-trapping antioxidant by mediating warfarin-resistant vitamin K reduction in the canonical vitamin K cycle: catalyzes NAD(P)H-dependent reduction of vitamin K (phylloquinone, menaquinone-4 and menadione) to hydroquinone forms. Hydroquinones act as potent radical-trapping antioxidants inhibitor of phospholipid peroxidation and ferroptosis. May play a role in mitochondrial stress signaling. Upon oxidative stress, associates with the lipid peroxidation end product 4-hydroxy-2-nonenal (HNE) forming a lipid adduct devoid of oxidoreductase activity, which then translocates from mitochondria into the nucleus triggering DNA damage and cell death. The chain is Ferroptosis suppressor protein 1 from Mus musculus (Mouse).